The chain runs to 126 residues: Large ribosomal subunit protein bL17 (126 aa).

The protein belongs to the bacterial ribosomal protein bL17 family. As to quaternary structure, part of the 50S ribosomal subunit. Contacts protein L32.

The chain is Large ribosomal subunit protein bL17 from Xylella fastidiosa (strain Temecula1 / ATCC 700964).